Reading from the N-terminus, the 110-residue chain is Transcription factor S (110 aa).

Residues Cys-4, Cys-7, Cys-22, Cys-25, Cys-71, Cys-74, Cys-99, and Cys-102 each coordinate Zn(2+). Residues 67–107 (TKVTCPKCGNDTAYWWEMQTRAGDEPSTIFYKCTKCGYTWR) form a TFIIS-type zinc finger.

Belongs to the archaeal rpoM/eukaryotic RPA12/RPB9/RPC11 RNA polymerase family.

The protein localises to the chromosome. Its function is as follows. Involved in transcriptional proofreading and fidelity. Induces RNA cleavage activity in RNA polymerase (RNAP). Stimulates transcription elongation by RNAP on both naked DNA and histone-bound DNA (chromatin), facilitating transcription through the histone barrier. Stimulation depends on transcript cleavage. In the presence of TFS, the cleavage activity of RNAP truncates RNA back to position +15 in a stepwise manner by releasing mainly dinucleotides from the 3'-end of the nascent RNA. The truncated RNAs are able to continue elongation. Misincorporation of nucleotides during elongation of transcription leads to arrested elongation complexes which are rescued by TFS-promoted removal of a dinucleotide from the 3'-end. TFS is able to induce a cleavage resynthesis cycle in stalled elongation complexes (resulting from the next missing nucleotide or a reduced incorporation rate of a wrong nucleotide) preventing misincorporation and enabling proofreading in a post-incorporation manner. Pausing of elongation complexes is the main determinant of TFS-induced RNA cleavage. This is Transcription factor S from Thermococcus kodakarensis (strain ATCC BAA-918 / JCM 12380 / KOD1) (Pyrococcus kodakaraensis (strain KOD1)).